The primary structure comprises 1645 residues: Thrombospondin type-1 domain-containing protein 7A (1645 aa).

A signal peptide spans 1 to 38 (MGLRAGRLASPSRGVLQLLRLPLLLLLLLSSGARGAAA). The Extracellular portion of the chain corresponds to 39–1595 (QGDTEVPTLY…FGPDGRLKTW (1557 aa)). 3 consecutive TSP type-1 domains span residues 46-105 (TLYL…KVCD), 109-181 (ELYD…IPCQ), and 183-236 (DCIV…NPCE). Asn-223 carries an N-linked (GlcNAc...) asparagine glycan. The disordered stretch occupies residues 255-300 (PHTRQARQARRRGKNKEREKERGKAVKDPEARELIKKKRNRNRQNR). Positions 256 to 304 (HTRQARQARRRGKNKEREKERGKAVKDPEARELIKKKRNRNRQNRQENR) form a coiled coil. A compositionally biased stretch (basic residues) spans 258–269 (RQARQARRRGKN). Residues 270–288 (KEREKERGKAVKDPEAREL) show a composition bias toward basic and acidic residues. A compositionally biased stretch (basic residues) spans 289-298 (IKKKRNRNRQ). Asn-321 carries an N-linked (GlcNAc...) asparagine glycan. TSP type-1 domains follow at residues 349–405 (ECQV…VSQG), 412–499 (ATYG…VPCP), 501–563 (ECEV…PSCY), 623–684 (DCVL…HPCT), 685–758 (VYHW…LPCR), 760–820 (DCVV…PTCH), 821–893 (SYRW…IPCQ), 895–948 (DCQF…CPCD), 949–1022 (KYNA…IPCP), 1024–1084 (DCKL…SDCN), 1085–1152 (QYIW…LPCP), 1154–1208 (DCVI…KNCY), 1209–1272 (HYDY…VECP), 1274–1329 (NCQL…KPCY), 1330–1400 (RWQY…QPCP), and 1402–1463 (DCYL…GQCY). Intrachain disulfides connect Cys-424–Cys-494, Cys-444–Cys-498, and Cys-455–Cys-483. Asn-439 carries an N-linked (GlcNAc...) asparagine glycan. N-linked (GlcNAc...) asparagine glycosylation occurs at Asn-489. Cystine bridges form between Cys-624/Cys-666 and Cys-635/Cys-639. The N-linked (GlcNAc...) asparagine glycan is linked to Asn-668. 7 cysteine pairs are disulfide-bonded: Cys-678/Cys-683, Cys-696/Cys-753, Cys-717/Cys-757, Cys-728/Cys-741, Cys-761/Cys-803, Cys-772/Cys-776, and Cys-813/Cys-819. Asn-706 carries N-linked (GlcNAc...) asparagine glycosylation. N-linked (GlcNAc...) asparagine glycosylation occurs at Asn-957. Disulfide bonds link Cys-961–Cys-1017, Cys-983–Cys-1021, Cys-994–Cys-1007, Cys-1025–Cys-1062, Cys-1036–Cys-1040, and Cys-1079–Cys-1083. The N-linked (GlcNAc...) asparagine glycan is linked to Asn-1032. Cys-1201 and Cys-1207 are disulfide-bonded. Asn-1213 carries an N-linked (GlcNAc...) asparagine glycan. Cystine bridges form between Cys-1220–Cys-1267, Cys-1228–Cys-1271, Cys-1239–Cys-1252, Cys-1275–Cys-1313, Cys-1286–Cys-1290, Cys-1323–Cys-1328, Cys-1339–Cys-1395, Cys-1346–Cys-1399, Cys-1357–Cys-1376, Cys-1403–Cys-1447, Cys-1414–Cys-1418, and Cys-1457–Cys-1462. An N-linked (GlcNAc...) asparagine glycan is attached at Asn-1264. Asn-1354 is a glycosylation site (N-linked (GlcNAc...) asparagine). N-linked (GlcNAc...) asparagine glycans are attached at residues Asn-1488 and Asn-1535. A helical membrane pass occupies residues 1596-1616 (VYGVAAGAFVLLVFIVSMIYL). Residues 1617–1645 (ACKKPKKPQRRQNNRLKPLTLAYDGDADM) lie on the Cytoplasmic side of the membrane.

Proteolytic cleavage in the extracellular region generates a 210 kDa soluble form. In terms of processing, extensively N-glycosylated. As to expression, detected on kidney podocytes along the glomerular capillary wall (at protein level).

It localises to the cell membrane. Its subcellular location is the cell projection. It is found in the secreted. Its function is as follows. Plays a role in actin cytoskeleton rearrangement. The soluble form promotes endothelial cell migration and filopodia formation during sprouting angiogenesis via a FAK-dependent mechanism. This chain is Thrombospondin type-1 domain-containing protein 7A (Thsd7a), found in Mus musculus (Mouse).